The chain runs to 1148 residues: Protein pianissimo A (1148 aa).

The span at 1-34 shows a compositional bias: low complexity; sequence MTSSDSSVNTTSSSFGNISISSPNHSSSTPPLNN. Residues 1-41 are disordered; the sequence is MTSSDSSVNTTSSSFGNISISSPNHSSSTPPLNNGNGNNVS. In terms of domain architecture, N-terminal Ras-GEF spans 803 to 914; that stretch reads KVSALSLNVL…STSGVYLPPH (112 aa).

It belongs to the RICTOR family. Part of a complex, TORC2, consisting of tor, lst8, piaA and ripA. Additional proteins, such as 14-3-3 and heat-shock proteins, may also belong to the TORC2 complex.

The protein localises to the cytoplasm. Regulates cell growth, chemotaxis, signal relay and the actin cytoskeleton. Required for chemoattractant receptor and G protein-mediated activation of the 12 transmembrane domain adenylyl cyclase. Functions as a part of protein complex TORC2. TORC2, is presumed to be indirectly negatively modulated by rapamycin and regulates actin polarization. TORC2, but not TORC1, negatively regulates phagocytosis. This protein and dagA protein CRAC, a cytosolic regulator, are both essential for activation of the enzyme adenylyl cyclase. This protein and CRAC do not function redundantly. Both proteins are integral components of the adenylyl cyclase activation pathway. The sequence is that of Protein pianissimo A (piaA) from Dictyostelium discoideum (Social amoeba).